We begin with the raw amino-acid sequence, 513 residues long: V-type proton ATPase subunit B, kidney isoform (513 aa).

Arg-394 provides a ligand contact to ATP. The PDZ-binding signature appears at 510–513 (DTAL).

It belongs to the ATPase alpha/beta chains family. V-ATPase is a heteromultimeric enzyme made up of two complexes: the ATP-hydrolytic V1 complex and the proton translocation V0 complex. The V1 complex consists of three catalytic AB heterodimers that form a heterohexamer, three peripheral stalks each consisting of EG heterodimers, one central rotor including subunits D and F, and the regulatory subunits C and H. The proton translocation complex V0 consists of the proton transport subunit a, a ring of proteolipid subunits c9c'', rotary subunit d, subunits e and f, and the accessory subunits ATP6AP1/Ac45 and ATP6AP2/PRR. Forms a complex with NHERF1 and SCL4A7. Kidney; localizes to early distal nephron, encompassing thick ascending limbs and distal convoluted tubules (at protein level). Expressed in the cochlea and endolymphatic sac.

It is found in the apical cell membrane. It localises to the basolateral cell membrane. Non-catalytic subunit of the V1 complex of vacuolar(H+)-ATPase (V-ATPase), a multisubunit enzyme composed of a peripheral complex (V1) that hydrolyzes ATP and a membrane integral complex (V0) that translocates protons. V-ATPase is responsible for acidifying and maintaining the pH of intracellular compartments and in some cell types, is targeted to the plasma membrane, where it is responsible for acidifying the extracellular environment. Essential for the proper assembly and activity of V-ATPase. In renal intercalated cells, mediates secretion of protons (H+) into the urine thereby ensuring correct urinary acidification. Required for optimal olfactory function by mediating the acidification of the nasal olfactory epithelium. The chain is V-type proton ATPase subunit B, kidney isoform (ATP6V1B1) from Homo sapiens (Human).